A 635-amino-acid chain; its full sequence is Membrane protein insertase YidC (635 aa).

The helical transmembrane segment at leucine 8 to proline 28 threads the bilayer. The interval proline 33 to glutamine 61 is disordered. 4 helical membrane-spanning segments follow: residues methionine 396 to phenylalanine 416, leucine 470 to isoleucine 490, serine 528 to methionine 548, and isoleucine 564 to valine 584. Residues isoleucine 615–lysine 635 form a disordered region. Residues lysine 624 to lysine 635 show a composition bias toward basic and acidic residues.

This sequence belongs to the OXA1/ALB3/YidC family. Type 1 subfamily. In terms of assembly, interacts with the Sec translocase complex via SecD. Specifically interacts with transmembrane segments of nascent integral membrane proteins during membrane integration.

Its subcellular location is the cell inner membrane. In terms of biological role, required for the insertion and/or proper folding and/or complex formation of integral membrane proteins into the membrane. Involved in integration of membrane proteins that insert both dependently and independently of the Sec translocase complex, as well as at least some lipoproteins. Aids folding of multispanning membrane proteins. This chain is Membrane protein insertase YidC, found in Paracoccus denitrificans (strain Pd 1222).